Here is a 277-residue protein sequence, read N- to C-terminus: Shikimate dehydrogenase (NADP(+)) (277 aa).

Residues 18–20 and Thr65 each bind shikimate; that span reads SKS. Catalysis depends on Lys69, which acts as the Proton acceptor. Glu81 provides a ligand contact to NADP(+). 2 residues coordinate shikimate: Asn90 and Asp106. NADP(+) is bound by residues 130–134, 154–159, and Met217; these read GAGGA and NRTFSK. Residue Tyr219 participates in shikimate binding. Position 241 (Gly241) interacts with NADP(+).

It belongs to the shikimate dehydrogenase family. In terms of assembly, homodimer.

The enzyme catalyses shikimate + NADP(+) = 3-dehydroshikimate + NADPH + H(+). Its pathway is metabolic intermediate biosynthesis; chorismate biosynthesis; chorismate from D-erythrose 4-phosphate and phosphoenolpyruvate: step 4/7. Functionally, involved in the biosynthesis of the chorismate, which leads to the biosynthesis of aromatic amino acids. Catalyzes the reversible NADPH linked reduction of 3-dehydroshikimate (DHSA) to yield shikimate (SA). The chain is Shikimate dehydrogenase (NADP(+)) from Vibrio vulnificus (strain CMCP6).